The sequence spans 274 residues: Large ribosomal subunit protein uL2 (274 aa).

A disordered region spans residues 223 to 274; that stretch reads VVMNPVDHPHGGGEGRTSGGRHPVSPWGVPTKGYKTRSNKRTDKYIVRRRNK.

The protein belongs to the universal ribosomal protein uL2 family. Part of the 50S ribosomal subunit. Forms a bridge to the 30S subunit in the 70S ribosome.

Functionally, one of the primary rRNA binding proteins. Required for association of the 30S and 50S subunits to form the 70S ribosome, for tRNA binding and peptide bond formation. It has been suggested to have peptidyltransferase activity; this is somewhat controversial. Makes several contacts with the 16S rRNA in the 70S ribosome. The polypeptide is Large ribosomal subunit protein uL2 (Vibrio cholerae serotype O1 (strain M66-2)).